Consider the following 432-residue polypeptide: Trigger factor (432 aa).

The PPIase FKBP-type domain occupies 161 to 246 (EDRVVIDFVG…LKKVEVMVLP (86 aa)).

The protein belongs to the FKBP-type PPIase family. Tig subfamily.

Its subcellular location is the cytoplasm. The catalysed reaction is [protein]-peptidylproline (omega=180) = [protein]-peptidylproline (omega=0). Its function is as follows. Involved in protein export. Acts as a chaperone by maintaining the newly synthesized protein in an open conformation. Functions as a peptidyl-prolyl cis-trans isomerase. This is Trigger factor (tig) from Pasteurella multocida (strain Pm70).